We begin with the raw amino-acid sequence, 506 residues long: MQLKVQPIDVKVGKYKVILNTIDAKELGVHEGDRVRIKNHVTLTAIVDFTEDMISPGMIGLYHEVKEALSKEWTETVEVFPAEKPKSTYIIRKTMDGQKLTKEEIDILVKDIVEENLAEIEIAAFLTATYINDMTDDETEWLTRAMIDSGDKLEFDTHPIMDKHSIGGVPGNKISLLIVPIVAANGLLIPKTSSRAITGAGGTADLMEILAPVEFDAAEIKRMTEEVGGVLVWGGATNIAPADDKLIKVEYPLSIDPHCQMLASIMAKKGAIGADHVVMDIPTGPGTKIKNVQEGRKLARDLINLGDRLGMDVDCALTYGASPVGRTIGPALEVIEALKVLESFEGPNSLIEKSASLAGMLLEMGNVAGKDKGYDLAIETLKNGKALTKFKEIIKIQGGNPDVTHKDISVGEFTEDIIAPNNGYILEMDNKRLVQIARLAGAPNDKGAGILLHRKQGEPLKEGDPVMTIYAEKKSKLENAVKSAKERPPFIVEGMMLERIQSFKEI.

AMP is bound by residues glycine 168, 194–199, and threonine 203; that span reads SRAITG. Aspartate 256 acts as the Proton donor in catalysis. AMP-binding residues include serine 264 and lysine 288.

It belongs to the thymidine/pyrimidine-nucleoside phosphorylase family. Type 2 subfamily.

The catalysed reaction is AMP + phosphate = alpha-D-ribose 1,5-bisphosphate + adenine. The enzyme catalyses CMP + phosphate = cytosine + alpha-D-ribose 1,5-bisphosphate. It carries out the reaction UMP + phosphate = alpha-D-ribose 1,5-bisphosphate + uracil. Catalyzes the conversion of AMP and phosphate to adenine and ribose 1,5-bisphosphate (R15P). Exhibits phosphorylase activity toward CMP and UMP in addition to AMP. Functions in an archaeal AMP degradation pathway, together with R15P isomerase and RubisCO. This Methanococcoides burtonii (strain DSM 6242 / NBRC 107633 / OCM 468 / ACE-M) protein is AMP phosphorylase.